Here is a 437-residue protein sequence, read N- to C-terminus: GTPase Era, mitochondrial (437 aa).

The transit peptide at 1-43 (MAASSWRGAVLLRTVSGLWQAGPDAAREWMTRLPSLLGFQQRC) directs the protein to the mitochondrion. Residues 112–330 (RVLRVVLLGA…QYLLAQARPG (219 aa)) form the Era-type G domain. Residues 120-127 (GAPNAGKS) are G1. GTP is bound at residue 120–127 (GAPNAGKS). The interval 146–150 (HTTRS) is G2. A G3 region spans residues 167–170 (DTPG). 167-171 (DTPGL) lines the GTP pocket. A Phosphoserine modification is found at serine 173. 236-239 (NKVD) contributes to the GTP binding site. Residues 236 to 239 (NKVD) form a G4 region. A disordered region spans residues 264 to 296 (LKTKQALRSRPDTHCPSPAAQGPNPQPVRDPQQ). Residues 308–310 (LSA) form a G5 region. One can recognise a KH type-2 domain in the interval 360–437 (LPEEVPYNVQ…QLRLSVKLLK (78 aa)).

This sequence belongs to the TRAFAC class TrmE-Era-EngA-EngB-Septin-like GTPase superfamily. Era GTPase family.

Its subcellular location is the mitochondrion matrix. It is found in the mitochondrion inner membrane. In terms of biological role, probable GTPase that plays a role in the mitochondrial ribosomal small subunit assembly. Specifically binds the 12S mitochondrial rRNA (12S mt-rRNA) to a 33 nucleotide section delineating the 3' terminal stem-loop region. May act as a chaperone that protects the 12S mt-rRNA on the 28S mitoribosomal subunit during ribosomal small subunit assembly. The sequence is that of GTPase Era, mitochondrial (ERAL1) from Bos taurus (Bovine).